Reading from the N-terminus, the 264-residue chain is Nuclear egress protein 1 (264 aa).

Positions 1-12 (MTVHKSRIRRSR) are enriched in basic residues. The interval 1–22 (MTVHKSRIRRSRSLSVTHRIQK) is disordered. The segment at 83–187 (CLEFSPYANE…HIVFQSRTLH (105 aa)) adopts a CCCH-type zinc-finger fold.

The protein belongs to the herpesviridae NEC1 protein family. Forms a heterohexameric complex with NEC2. Interacts with capsid vertex specific component 2/CVC2; this interaction directs the capsid to the host inner nuclear membrane to initiate budding. Post-translationally, phosphorylated at serine residues in the N-terminus. This phosphorylation regulates the localization within the inner nuclear membrane.

The protein resides in the host nucleus inner membrane. Its function is as follows. Plays an essential role in virion nuclear egress, the first step of virion release from infected cell. Within the host nucleus, NEC1 interacts with the newly formed capsid through the vertexes and directs it to the inner nuclear membrane by associating with NEC2. Induces the budding of the capsid at the inner nuclear membrane as well as its envelopment into the perinuclear space. There, the NEC1/NEC2 complex promotes the fusion of the enveloped capsid with the outer nuclear membrane and the subsequent release of the viral capsid into the cytoplasm where it will reach the secondary budding sites in the host Golgi or trans-Golgi network. This chain is Nuclear egress protein 1, found in Human herpesvirus 6A (strain Uganda-1102) (HHV-6 variant A).